A 108-amino-acid chain; its full sequence is Protein FMC1 homolog (108 aa).

Belongs to the FMC1 family.

The polypeptide is Protein FMC1 homolog (Caenorhabditis elegans).